A 106-amino-acid chain; its full sequence is Guanyl-specific ribonuclease Th1 (106 aa).

2 disulfide bridges follow: cysteine 5-cysteine 103 and cysteine 23-cysteine 84. The active site involves histidine 39. The active-site Proton acceptor is the glutamate 58. The Proton donor role is filled by histidine 92.

It belongs to the ribonuclease N1/T1 family.

It catalyses the reaction [RNA] containing guanosine + H2O = an [RNA fragment]-3'-guanosine-3'-phosphate + a 5'-hydroxy-ribonucleotide-3'-[RNA fragment].. This is Guanyl-specific ribonuclease Th1 from Trichoderma harzianum (Hypocrea lixii).